Reading from the N-terminus, the 911-residue chain is Anoctamin-6 (911 aa).

The Cytoplasmic portion of the chain corresponds to 1–301 (MQMMTRKVLL…YGEKIGIYFA (301 aa)). Residues 302 to 322 (WLGYYTQMLLLAAVVGVACFL) form a helical membrane-spanning segment. The Extracellular segment spans residues 323 to 376 (YGYLDQDNCTWSKEVCDPDIGGQILMCPQCDRLCPFWRLNITCESSKKLCIFDS). N-linked (GlcNAc...) asparagine glycosylation is present at Asn-330. 5 disulfides stabilise this stretch: Cys-331/Cys-372, Cys-338/Cys-365, Cys-349/Cys-807, Cys-352/Cys-356, and Cys-596/Cys-601. An N-linked (GlcNAc...) asparagine glycan is attached at Asn-362. A helical transmembrane segment spans residues 377 to 397 (FGTLIFAVFMGVWVTLFLEFW). The Cytoplasmic segment spans residues 398 to 456 (KRRQAELEYEWDTVELQQEEQARPEYEAQCNHVVINEITQEEERIPFTTCGKCIRVTLC). Residues 457 to 477 (ASAVFFWILLIIASVIGIIVY) form a helical membrane-spanning segment. Over 478–510 (RLSVFIVFSTTLPKNPNGTDPIQKYLTPQMATS) the chain is Extracellular. An N-linked (GlcNAc...) asparagine glycan is attached at Asn-494. Residues 511–531 (ITASIISFIIIMILNTIYEKV) form a helical membrane-spanning segment. Residues 532-552 (AIMITNFELPRTQTDYENSLT) lie on the Cytoplasmic side of the membrane. The chain crosses the membrane as a helical span at residues 553–573 (MKMFLFQFVNYYSSCFYIAFF). Topologically, residues 574–602 (KGKFVGYPGDPVYLLGKYRSEECDPGGCL) are extracellular. Residues 603–622 (LELTTQLTIIMGGKAIWNNI) traverse the membrane as a helical segment. Residues 623 to 664 (QEVLLPWVMNLIGRYKRVSGSEKITPRWEQDYHLQPMGKLGL) lie on the Cytoplasmic side of the membrane. Ca(2+) is bound by residues Glu-624, Glu-667, and Glu-670. The next 2 helical transmembrane spans lie at 665-685 (FYEY…VASF) and 686-706 (PLAP…DAWK). At 707–723 (LTTQFRRMVPEKAQDIG) the chain is on the cytoplasmic side. Residues 724-744 (AWQPIMQGIAILAVVTNAMII) form a helical membrane-spanning segment. At 745 to 837 (AFTSDMIPRL…YWHVIAAKLA (93 aa)) the chain is on the extracellular side. 3 N-linked (GlcNAc...) asparagine glycosylation sites follow: Asn-778, Asn-785, and Asn-803. Residues 838 to 858 (FIIVMEHIIYSVKFFISYAIP) traverse the membrane as a helical segment. Residues 859–911 (DVSKITKSKIKREKYLTQKLLHESHLKDLTKNMGIIAERIGGTVDNSVRPKLE) are Cytoplasmic-facing.

This sequence belongs to the anoctamin family. As to quaternary structure, homodimer. In terms of tissue distribution, predominant expression seen in epithelial tissues. Also found in skeletal system where it is primarily expressed in osteoblasts.

It localises to the cell membrane. It catalyses the reaction a 1,2-diacyl-sn-glycero-3-phospho-L-serine(in) = a 1,2-diacyl-sn-glycero-3-phospho-L-serine(out). It carries out the reaction a beta-D-galactosyl-(1&lt;-&gt;1')-N-acylsphing-4-enine(out) = a beta-D-galactosyl-(1&lt;-&gt;1')-N-acylsphing-4-enine(in). The enzyme catalyses a 1,2-diacyl-sn-glycero-3-phosphocholine(in) = a 1,2-diacyl-sn-glycero-3-phosphocholine(out). Exhibits synergistic gating by Ca(2+) and voltage. Inhibited by some non-specific cation channel blockers such as: ruthenium red, 2-aminoethyl diphenylborinate (2APB), gadolinium and cadmium ions. Functionally, small-conductance calcium-activated nonselective cation (SCAN) channel which acts as a regulator of phospholipid scrambling in platelets, osteoblasts and fetal thymocytes. Phospholipid scrambling results in surface exposure of phosphatidylserine which in platelets is essential to trigger the clotting system whereas in osteoblasts is essential for the deposition of hydroxyapatite during bone mineralization. Has calcium-dependent phospholipid scramblase activity; scrambles phosphatidylserine, phosphatidylcholine and galactosylceramide. Can generate outwardly rectifying chloride channel currents in airway epithelial cells and Jurkat T lymphocytes. The protein is Anoctamin-6 (Ano6) of Mus musculus (Mouse).